A 310-amino-acid chain; its full sequence is Olfactory receptor 5P55 (310 aa).

Over 1 to 25 (METQNHTTVTEFILLGLTESSTLRV) the chain is Extracellular. N-linked (GlcNAc...) asparagine glycosylation occurs at Asn-5. The chain crosses the membrane as a helical span at residues 26 to 46 (ILFMVFLGIYTVTLVGNFSII). The Cytoplasmic segment spans residues 47-54 (SLIRSCPQ). Residues 55-75 (LHTPMYLFLSHLAFVDIGFST) traverse the membrane as a helical segment. Over 76 to 99 (SITPTMFKGFLGNRLVLSVAACIA) the chain is Extracellular. Cysteines 97 and 189 form a disulfide. Residues 100-120 (QFCITVTFGTVECFLLAVMAY) form a helical membrane-spanning segment. Topologically, residues 121–133 (DRYVAICSPLLYS) are cytoplasmic. Residues 134–154 (THMSPRICFLLVGASYVGGCV) form a helical membrane-spanning segment. Topologically, residues 155-196 (NSGAFTSCLSILSFCGPNQIDHFFCDFPAVLKLSCSDVSIIG) are extracellular. A helical transmembrane segment spans residues 197 to 217 (IIPSISAGSIIVITVFVIAVS). The Cytoplasmic segment spans residues 218–237 (YAYILITILKMRSTEGRQKA). The helical transmembrane segment at 238 to 258 (FSTCTSHLTAVTLYYGTITFI) threads the bilayer. Residues 259-271 (YVMPKSNYSTAQN) are Extracellular-facing. Asn-265 carries N-linked (GlcNAc...) asparagine glycosylation. Residues 272–292 (KILSVFYTVVIPMLNPLIYSL) traverse the membrane as a helical segment. The Cytoplasmic portion of the chain corresponds to 293–310 (RNRDVKEALRKAIIRIFP).

It belongs to the G-protein coupled receptor 1 family.

It localises to the cell membrane. Its function is as follows. Potential odorant receptor. The polypeptide is Olfactory receptor 5P55 (Mus musculus (Mouse)).